The sequence spans 268 residues: Tryptophan synthase alpha chain (268 aa).

Active-site proton acceptor residues include Glu49 and Asp60.

Belongs to the TrpA family. As to quaternary structure, tetramer of two alpha and two beta chains.

The enzyme catalyses (1S,2R)-1-C-(indol-3-yl)glycerol 3-phosphate + L-serine = D-glyceraldehyde 3-phosphate + L-tryptophan + H2O. It participates in amino-acid biosynthesis; L-tryptophan biosynthesis; L-tryptophan from chorismate: step 5/5. Functionally, the alpha subunit is responsible for the aldol cleavage of indoleglycerol phosphate to indole and glyceraldehyde 3-phosphate. The protein is Tryptophan synthase alpha chain of Dechloromonas aromatica (strain RCB).